We begin with the raw amino-acid sequence, 126 residues long: Aspartate 1-decarboxylase (126 aa).

The active-site Schiff-base intermediate with substrate; via pyruvic acid is the Ser25. Position 25 is a pyruvic acid (Ser) (Ser25). Thr57 lines the substrate pocket. The active-site Proton donor is Tyr58. 73-75 (GAA) provides a ligand contact to substrate.

Belongs to the PanD family. In terms of assembly, heterooctamer of four alpha and four beta subunits. The cofactor is pyruvate. Post-translationally, is synthesized initially as an inactive proenzyme, which is activated by self-cleavage at a specific serine bond to produce a beta-subunit with a hydroxyl group at its C-terminus and an alpha-subunit with a pyruvoyl group at its N-terminus.

The protein localises to the cytoplasm. It carries out the reaction L-aspartate + H(+) = beta-alanine + CO2. It participates in cofactor biosynthesis; (R)-pantothenate biosynthesis; beta-alanine from L-aspartate: step 1/1. In terms of biological role, catalyzes the pyruvoyl-dependent decarboxylation of aspartate to produce beta-alanine. The polypeptide is Aspartate 1-decarboxylase (Salmonella dublin (strain CT_02021853)).